The following is an 883-amino-acid chain: Serine/threonine-protein kinase greatwall (883 aa).

M1 carries the N-acetylmethionine modification. Residues M1–R23 are disordered. One can recognise a Protein kinase domain in the interval F35–F839. Residues I41–V49 and K62 each bind ATP. Residue D156 is the Proton acceptor of the active site. T209 and T224 each carry phosphothreonine. Phosphoserine is present on S295. Residues R298–S317 are disordered. Low complexity predominate over residues T301–S314. Residues S373 and S456 each carry the phosphoserine modification. The segment at E511–P530 is disordered. Residue T523 is modified to Phosphothreonine. Phosphoserine is present on residues S556 and S560. The interval I569–N597 is disordered. Phosphoserine is present on residues S635, S661, and S672. Residues R706 to V737 form a disordered region. Residues P710 to S720 are compositionally biased toward polar residues. A Phosphothreonine modification is found at T726. S729 carries the phosphoserine modification. Residue T745 is modified to Phosphothreonine; by CDK1. Positions S840–L883 constitute an AGC-kinase C-terminal domain. Residues S879 and S882 each carry the phosphoserine modification.

The protein belongs to the protein kinase superfamily. AGC Ser/Thr protein kinase family. In terms of processing, phosphorylation at Thr-745 by CDK1 during M phase activates its kinase activity. Maximum phosphorylation occurs in prometaphase.

The protein localises to the cytoplasm. It is found in the cytoskeleton. The protein resides in the microtubule organizing center. Its subcellular location is the centrosome. It localises to the nucleus. It carries out the reaction L-seryl-[protein] + ATP = O-phospho-L-seryl-[protein] + ADP + H(+). The enzyme catalyses L-threonyl-[protein] + ATP = O-phospho-L-threonyl-[protein] + ADP + H(+). In terms of biological role, serine/threonine kinase that plays a key role in M phase by acting as a regulator of mitosis entry and maintenance. Acts by promoting the inactivation of protein phosphatase 2A (PP2A) during M phase: does not directly inhibit PP2A but acts by mediating phosphorylation and subsequent activation of ARPP19 and ENSA at 'Ser-62' and 'Ser-67', respectively. ARPP19 and ENSA are phosphatase inhibitors that specifically inhibit the PPP2R2D (PR55-delta) subunit of PP2A. Inactivation of PP2A during M phase is essential to keep cyclin-B1-CDK1 activity high. Following DNA damage, it is also involved in checkpoint recovery by being inhibited. The chain is Serine/threonine-protein kinase greatwall (MASTL) from Bos taurus (Bovine).